Reading from the N-terminus, the 217-residue chain is Transmembrane protein 253 (217 aa).

4 helical membrane-spanning segments follow: residues 33–53 (LVLA…AVSV), 62–82 (MATA…TVTL), 96–116 (MMIF…VEVM), and 138–158 (LSAE…LFLL). Residues 187 to 217 (PGLENGPTVASTGANERVGQREQTRAALLPP) form a disordered region.

Its subcellular location is the membrane. This chain is Transmembrane protein 253 (TMEM253), found in Homo sapiens (Human).